A 186-amino-acid chain; its full sequence is dCTP deaminase (186 aa).

Residue 107–112 (KSTYAR) participates in dCTP binding. Residue Glu-133 is the Proton donor/acceptor of the active site. DCTP-binding residues include Gln-152, Tyr-166, and Gln-176.

Belongs to the dCTP deaminase family. As to quaternary structure, homotrimer.

The catalysed reaction is dCTP + H2O + H(+) = dUTP + NH4(+). Its pathway is pyrimidine metabolism; dUMP biosynthesis; dUMP from dCTP (dUTP route): step 1/2. Functionally, catalyzes the deamination of dCTP to dUTP. The sequence is that of dCTP deaminase from Campylobacter fetus subsp. fetus (strain 82-40).